The chain runs to 500 residues: Mucin-like protein 3 (500 aa).

Positions 1 to 27 (MAQPTSGLYSTFGFFICLLFFPASWEA) are cleaved as a signal peptide. Residues 28-429 (GANTFQELQK…GENNSFPVWA (402 aa)) lie on the Extracellular side of the membrane. Disordered stretches follow at residues 55-198 (THRA…SQKP) and 275-324 (EGKT…PTAS). The segment covering 58–71 (ASSDQKTSRQHPPD) has biased composition (basic and acidic residues). Positions 76-89 (TATQKAKNQCNTTR) are enriched in polar residues. N-linked (GlcNAc...) asparagine glycosylation is present at N108. Composition is skewed to basic and acidic residues over residues 111–123 (VRHEMPPASEKDL) and 132–142 (ARNERSADDPR). N148 carries N-linked (GlcNAc...) asparagine glycosylation. Composition is skewed to polar residues over residues 159–178 (PRRNTSCMPSTRRTSLTTKS), 279–289 (SPASESSSQAQ), and 298–324 (TSASENTIPVSAKSTPSTEKATKPTAS). The helical transmembrane segment at 430-450 (IVIVILMAVIILLVFIGLILL) threads the bilayer. The Cytoplasmic segment spans residues 451–500 (VSCASRARHVLTQNSEEPEPQPEDKGSRNSYPVYLMEQQNLNLNQIPSPP).

The protein localises to the cell membrane. The protein resides in the cytoplasm. Its function is as follows. May modulate NF-kappaB signaling and play a role in cell growth. This chain is Mucin-like protein 3, found in Mus musculus (Mouse).